The following is a 316-amino-acid chain: MNQLEGLKQFTTVVADSGDIESIRHYTPQDATTNPSLILKAASLTAYQPLFEDTLAYARKQGGTRETQIINASDKLAVNIGVEILKSVPGRVSTEVDARLSFDRGMCVAKARKLVALYQEQGIDKSRILIKLASTWEGIKAAEELEKEGINCNLTLLFSFAQARACAEAGVYLISPFVGRIYDWYNQRKPLDPYVADEDPGVVSVRKIYDYCKQHRYQTVIMGASFRKVEQILALAGCDRLTISTTLLEELHKADTRVERKLSPSTEGFHQPAPLSEPEFRWEHNQDAMAVDKLAEGIRQFAVDQQSLEDLLAAKL.

Catalysis depends on lysine 131, which acts as the Schiff-base intermediate with substrate.

Belongs to the transaldolase family. Type 1 subfamily. Homodimer.

The protein localises to the cytoplasm. The enzyme catalyses D-sedoheptulose 7-phosphate + D-glyceraldehyde 3-phosphate = D-erythrose 4-phosphate + beta-D-fructose 6-phosphate. It functions in the pathway carbohydrate degradation; pentose phosphate pathway; D-glyceraldehyde 3-phosphate and beta-D-fructose 6-phosphate from D-ribose 5-phosphate and D-xylulose 5-phosphate (non-oxidative stage): step 2/3. Transaldolase is important for the balance of metabolites in the pentose-phosphate pathway. The polypeptide is Transaldolase (Sodalis glossinidius (strain morsitans)).